Consider the following 137-residue polypeptide: Golgin subfamily A member 7 (137 aa).

2 S-palmitoyl cysteine lipidation sites follow: C69 and C72.

Belongs to the ERF4 family. In terms of assembly, interacts with GOLGA3. Interacts with ZDHHC9. In terms of processing, palmitoylated on Cys-69 and Cys-72; which is required for Golgi localization and interaction with GOLGA3.

The protein localises to the golgi apparatus membrane. May be involved in protein transport from Golgi to cell surface. The ZDHHC9-GOLGA7 complex is a palmitoyltransferase specific for HRAS and NRAS. This is Golgin subfamily A member 7 (Golga7) from Rattus norvegicus (Rat).